An 853-amino-acid chain; its full sequence is DNA mismatch repair protein MutS (853 aa).

613–620 (GPNMGGKS) is an ATP binding site.

This sequence belongs to the DNA mismatch repair MutS family.

Its function is as follows. This protein is involved in the repair of mismatches in DNA. It is possible that it carries out the mismatch recognition step. This protein has a weak ATPase activity. The polypeptide is DNA mismatch repair protein MutS (Vibrio campbellii (strain ATCC BAA-1116)).